We begin with the raw amino-acid sequence, 257 residues long: MLVVISPAKTLDFNKINETLPMTNPKFLKEARVLVEELKNYDSYSLGKLMKTSDKLSLLNKNRFDIWNESFDNSRQCLIAFKGEVFKGIDVGSFNVEDLFYTNDHLRILSGLYGALNPFDGVNPYRLEMGTKLSFNNYKNLYDYWGDKLKYKIIEDIKSTGDNMLVNLASYEYFKSIEGIDLIDTSVNIVTPIFKEYRNGEYKIVTMKAKKARGLMVSFIMKNKINNIEDLKKFDLEGYLYNEDLSNNNELVFTLEN.

The protein belongs to the UPF0246 family.

The sequence is that of UPF0246 protein CLH_2088 from Clostridium botulinum (strain Alaska E43 / Type E3).